The sequence spans 604 residues: Glucose oxidase 2 (604 aa).

The first 16 residues, Met-1 to Ala-16, serve as a signal peptide directing secretion. FAD contacts are provided by Leu-49 and Thr-50. N-linked (GlcNAc...) asparagine glycosylation occurs at Asn-63. Residue Glu-70 coordinates FAD. N-linked (GlcNAc...) asparagine glycosylation is present at Asn-109. FAD contacts are provided by Ser-123, Asn-127, Gly-128, and Ser-130. A disulfide bridge connects residues Cys-184 and Cys-226. Residue Asn-214 is glycosylated (N-linked (GlcNAc...) asparagine). Val-270 is an FAD binding site. 3 N-linked (GlcNAc...) asparagine glycosylation sites follow: Asn-375, Asn-408, and Asn-517. His-536 serves as the catalytic Proton acceptor. The O2 site is built by Arg-557 and Val-558. Positions 569 and 581 each coordinate FAD. Asn-600 carries N-linked (GlcNAc...) asparagine glycosylation.

It belongs to the GMC oxidoreductase family. Homodimer. Requires FAD as cofactor.

It is found in the secreted. It localises to the cell wall. The protein localises to the cytoplasm. Its subcellular location is the extracellular space. The protein resides in the extracellular matrix. It catalyses the reaction beta-D-glucose + O2 = D-glucono-1,5-lactone + H2O2. Functionally, glucose oxidase catalyzes the oxidation of beta-D-glucose to D-glucono-delta-lactone and hydrogen peroxide in the presence of molecular oxygen. D-glucono-delta-lactone is sequentially hydrolyzed by lactonase to D-gluconic acid, and the resulting hydrogen peroxide is hydrolyzed by catalase to oxygen and water. Acts as a key factor contributing to fungal disease of apple. The production of gluconic acid leads to host tissue acidification that enhances the expression of pectolytic enzymes and the establishment of conditions for necrotrophic development of P.expansum. The protein is Glucose oxidase 2 of Penicillium expansum (Blue mold rot fungus).